The sequence spans 2111 residues: Mycocerosic acid synthase-like polyketide synthase (2111 aa).

A signal peptide spans 1–15 (MTQNCVAPVAIIGMA). C16 is lipidated: N-palmitoyl cysteine. The S-diacylglycerol cysteine moiety is linked to residue C16. A Ketosynthase family 3 (KS3) domain is found at 16-428 (CRLPGAINSP…GTNVHAVLEQ (413 aa)). Residue C178 is the Acyl-thioester intermediate; for beta-ketoacyl synthase activity of the active site. Residues H313 and H349 each act as for beta-ketoacyl synthase activity in the active site. Residues 430–537 (PESPAETAAE…MPQQAVTNDD (108 aa)) are linker domain (LD). An acyltransferase (AT) region spans residues 538 to 837 (RGPVWVFSGQ…LAVFAAMRRQ (300 aa)). Catalysis depends on S629, which acts as the Acyl-ester intermediate; for acyltransferase activity. Positions 896–1176 (PSVSVHPLLG…LSAMGLQLGT (281 aa)) are dehydratase (DH). Positions 901-1025 (HPLLGSHVVL…GDVDAERPAA (125 aa)) are N-terminal hotdog fold. The 283-residue stretch at 901-1183 (HPLLGSHVVL…LGTGNSDKAE (283 aa)) folds into the PKS/mFAS DH domain. Residue H934 is the Proton acceptor; for dehydratase activity of the active site. Residues 1036–1183 (PNRVDGDELR…LGTGNSDKAE (148 aa)) form a C-terminal hotdog fold region. Residue D1100 is the Proton donor; for dehydratase activity of the active site. A pseudo beta-ketoacyl reductase (PsiKR) region spans residues 1215 to 1391 (SWLVILAGDD…SPEDETAWRD (177 aa)). Residues 1419–1743 (EGMRLVVRNP…QHTGKLVIDI (325 aa)) form an enoylreductase (ER) region. Residues 1765-2008 (GAYVITGGLG…RSPFAELFLA (244 aa)) form a beta-ketoacyl reductase (KR) region. Residues 1773–1776 (LGGL), 1796–1799 (SRSA), 1824–1825 (DI), and 1902–1903 (FS) each bind NADP(+). The Carrier domain maps to 2029–2104 (EEWPTHLRRL…QRLCEMLDTD (76 aa)). Residue S2064 is modified to O-(pantetheine 4'-phosphoryl)serine.

Homodimer.

The protein localises to the cell membrane. The protein operates within lipid metabolism; fatty acid biosynthesis. Polyketide synthase involved in the biosynthesis of 2,4-dimethyl-2-eicosenoic acid, a lipid component of the lipooligosaccharides (LOS) which are not located at the bacterial surface but rather in deeper compartments of the cell envelope of M.smegmatis. The sequence is that of Mycocerosic acid synthase-like polyketide synthase from Mycolicibacterium smegmatis (strain ATCC 700084 / mc(2)155) (Mycobacterium smegmatis).